The primary structure comprises 352 residues: Endoplasmic reticulum GDP-fucose transporter (352 aa).

10 helical membrane-spanning segments follow: residues 9-29 (LGML…ELII), 34-54 (GAGN…GLVF), 70-90 (YVIL…AFNF), 96-116 (LHMI…IVLL), 126-146 (SSVA…SGDV), 163-183 (FFWW…TAYM), 201-221 (ALFF…GNIV), 249-271 (LMLF…VYVL), 276-298 (ASLT…SIIY), and 305-325 (LNHW…ANVI). Residues 350–352 (KVE) carry the Prevents secretion from ER motif.

The protein belongs to the nucleotide-sugar transporter family. SLC35B subfamily.

Its subcellular location is the endoplasmic reticulum membrane. In terms of biological role, sugar transporter that specifically mediates the transport of UDP-N-acetylglucosamine (UDP-GlcNAc), GDP-fucose and UDP-xylose. Functions redundantly with Gfr in the O-fucosylation of Notch, positively regulating Notch signaling. Involved in the biosynthesis of heparan sulfate-glycosaminoglycan (HS-GAG) and in Dpp signaling in the wing imaginal disk. The chain is Endoplasmic reticulum GDP-fucose transporter from Drosophila melanogaster (Fruit fly).